A 207-amino-acid polypeptide reads, in one-letter code: ADP-ribosylation factor (207 aa).

Gly2 carries the N-myristoyl glycine lipid modification. Residues 32-39 (GLDGAGKT), 75-79 (DIGGQ), and 133-136 (NKID) contribute to the GTP site.

Belongs to the small GTPase superfamily. Arf family.

It localises to the golgi apparatus. Its function is as follows. GTP-binding protein involved in protein trafficking; may modulate vesicle budding and uncoating within the Golgi apparatus. In Encephalitozoon cuniculi (strain GB-M1) (Microsporidian parasite), this protein is ADP-ribosylation factor (ARF-1).